The following is a 404-amino-acid chain: Putative Peroxidase 48 (404 aa).

The first 18 residues, 1–18 (MRFLGDYKFALLTCSVIA), serve as a signal peptide directing secretion. Cystine bridges form between cysteine 77-cysteine 156, cysteine 110-cysteine 115, cysteine 162-cysteine 397, and cysteine 241-cysteine 273. Histidine 108 (proton acceptor) is an active-site residue. Aspartate 109, isoleucine 112, glycine 114, aspartate 116, and serine 118 together coordinate Ca(2+). Residue asparagine 136 is glycosylated (N-linked (GlcNAc...) asparagine). Proline 204 is a binding site for substrate. A heme b-binding site is contributed by histidine 234. Position 235 (serine 235) interacts with Ca(2+). Residue asparagine 250 is glycosylated (N-linked (GlcNAc...) asparagine). A disordered region spans residues 276–307 (SVSTSSPSAPPDIGLPPSLPASDSENSYGMSS). A compositionally biased stretch (pro residues) spans 283–294 (SAPPDIGLPPSL). Aspartate 287 contributes to the Ca(2+) binding site. Residues 296–307 (ASDSENSYGMSS) are compositionally biased toward polar residues.

This sequence belongs to the peroxidase family. Classical plant (class III) peroxidase subfamily. Heme b serves as cofactor. Ca(2+) is required as a cofactor.

The protein resides in the secreted. The enzyme catalyses 2 a phenolic donor + H2O2 = 2 a phenolic radical donor + 2 H2O. Its function is as follows. Removal of H(2)O(2), oxidation of toxic reductants, biosynthesis and degradation of lignin, suberization, auxin catabolism, response to environmental stresses such as wounding, pathogen attack and oxidative stress. These functions might be dependent on each isozyme/isoform in each plant tissue. The sequence is that of Putative Peroxidase 48 (PER48) from Arabidopsis thaliana (Mouse-ear cress).